A 400-amino-acid chain; its full sequence is tRNA(Ile)-lysidine synthase (400 aa).

Residue 20–25 (SGGLDS) coordinates ATP.

The protein belongs to the tRNA(Ile)-lysidine synthase family.

Its subcellular location is the cytoplasm. The enzyme catalyses cytidine(34) in tRNA(Ile2) + L-lysine + ATP = lysidine(34) in tRNA(Ile2) + AMP + diphosphate + H(+). In terms of biological role, ligates lysine onto the cytidine present at position 34 of the AUA codon-specific tRNA(Ile) that contains the anticodon CAU, in an ATP-dependent manner. Cytidine is converted to lysidine, thus changing the amino acid specificity of the tRNA from methionine to isoleucine. The sequence is that of tRNA(Ile)-lysidine synthase from Wigglesworthia glossinidia brevipalpis.